Consider the following 216-residue polypeptide: Fibroblast growth factor 19 (216 aa).

Residues 1–24 (MRSGCVVVHVWILAGLWLAVAGRP) form the signal peptide. 2 cysteine pairs are disulfide-bonded: cysteine 58-cysteine 70 and cysteine 102-cysteine 120.

This sequence belongs to the heparin-binding growth factors family. Interacts with FGFR1, FGFR2, FGFR3 and FGFR4. Affinity between fibroblast growth factors (FGFs) and their receptors is increased by KL, KLB and heparan sulfate glycosaminoglycans that function as coreceptors. Interacts with KL; this interaction is direct. Interacts with KLB; this interaction is direct. Interacts with FGFR4 in the presence of heparin, KL or KLB. Interacts with MALRD1. Expressed in fetal brain, cartilage, retina, and adult gall bladder.

It is found in the secreted. Involved in the suppression of bile acid biosynthesis through down-regulation of CYP7A1 expression, following positive regulation of the JNK and ERK1/2 cascades. Stimulates glucose uptake in adipocytes. Activity requires the presence of KLB and FGFR4. The sequence is that of Fibroblast growth factor 19 (FGF19) from Homo sapiens (Human).